Reading from the N-terminus, the 255-residue chain is MLKVGIFGATGRVGKLLIEEILNHTHFNLSSVYVRNELQYSLPSSTMVTKDFEIFLQASDVIIDFSSPEATKALLEVALSYPKPLVIGTTGLDNDIQHLLENASHTMPILYATNMSKGVAMLNKIGALVAATLKESDIEICEIHHRYKKDAPSGTALTLAQSCAKARNLKLSDVRISGRNGNIGERNSNEIGVMSLRGGDVAGRHTIGFYLDGEYLELTHNATSRLTFAKGALDMAKWIVTQKNGLYSIEDALEI.

Residues 8 to 13, 88 to 90, and 112 to 115 contribute to the NAD(+) site; these read GATGRV, GTT, and ATNM. Catalysis depends on His144, which acts as the Proton donor/acceptor. His145 provides a ligand contact to (S)-2,3,4,5-tetrahydrodipicolinate. Lys148 (proton donor) is an active-site residue. Residue 154 to 155 participates in (S)-2,3,4,5-tetrahydrodipicolinate binding; the sequence is GT.

This sequence belongs to the DapB family.

The protein resides in the cytoplasm. The enzyme catalyses (S)-2,3,4,5-tetrahydrodipicolinate + NAD(+) + H2O = (2S,4S)-4-hydroxy-2,3,4,5-tetrahydrodipicolinate + NADH + H(+). The catalysed reaction is (S)-2,3,4,5-tetrahydrodipicolinate + NADP(+) + H2O = (2S,4S)-4-hydroxy-2,3,4,5-tetrahydrodipicolinate + NADPH + H(+). The protein operates within amino-acid biosynthesis; L-lysine biosynthesis via DAP pathway; (S)-tetrahydrodipicolinate from L-aspartate: step 4/4. Functionally, catalyzes the conversion of 4-hydroxy-tetrahydrodipicolinate (HTPA) to tetrahydrodipicolinate. In Helicobacter hepaticus (strain ATCC 51449 / 3B1), this protein is 4-hydroxy-tetrahydrodipicolinate reductase.